We begin with the raw amino-acid sequence, 525 residues long: UPF0288 protein MA_3997 (525 aa).

The protein belongs to the UPF0288 family.

This is UPF0288 protein MA_3997 from Methanosarcina acetivorans (strain ATCC 35395 / DSM 2834 / JCM 12185 / C2A).